The primary structure comprises 745 residues: Polyribonucleotide nucleotidyltransferase (745 aa).

Positions 487 and 493 each coordinate Mg(2+). The region spanning 554 to 613 (PSTTTIKIDKDKIRDIIGPGGKVIKEICEISGAKIDISDDGTVSIYASDRDKLKVALDKI) is the KH domain. Residues 623–691 (GEIFNGTVMK…NKGKAKLTIK (69 aa)) form the S1 motif domain. Positions 691-745 (KNADKDKSSNNTKPKTNAKDNSEPEQRRDSSKKRAWNEDNNAETAEVITERKYFN) are disordered. Positions 707-719 (NAKDNSEPEQRRD) are enriched in basic and acidic residues.

It belongs to the polyribonucleotide nucleotidyltransferase family. Mg(2+) serves as cofactor.

Its subcellular location is the cytoplasm. It catalyses the reaction RNA(n+1) + phosphate = RNA(n) + a ribonucleoside 5'-diphosphate. Its function is as follows. Involved in mRNA degradation. Catalyzes the phosphorolysis of single-stranded polyribonucleotides processively in the 3'- to 5'-direction. The protein is Polyribonucleotide nucleotidyltransferase of Rickettsia massiliae (strain Mtu5).